The sequence spans 247 residues: 2,3-bisphosphoglycerate-dependent phosphoglycerate mutase (247 aa).

Substrate contacts are provided by residues Arg-8–Asn-15, Thr-21–Gly-22, Arg-60, Glu-87–Tyr-90, Lys-98, Arg-114–Arg-115, and Gly-183–Asn-184. The Tele-phosphohistidine intermediate role is filled by His-9. The Proton donor/acceptor role is filled by Glu-87.

This sequence belongs to the phosphoglycerate mutase family. BPG-dependent PGAM subfamily. In terms of assembly, homodimer.

The enzyme catalyses (2R)-2-phosphoglycerate = (2R)-3-phosphoglycerate. The protein operates within carbohydrate degradation; glycolysis; pyruvate from D-glyceraldehyde 3-phosphate: step 3/5. In terms of biological role, catalyzes the interconversion of 2-phosphoglycerate and 3-phosphoglycerate. The polypeptide is 2,3-bisphosphoglycerate-dependent phosphoglycerate mutase (Methylibium petroleiphilum (strain ATCC BAA-1232 / LMG 22953 / PM1)).